Consider the following 169-residue polypeptide: Glycine-rich RNA-binding protein 8 (169 aa).

An RRM domain is found at 6–84 (YRCFVGGLAW…RVITVNEAQS (79 aa)). Arginine 47 is subject to ADP-ribosylarginine; by HopU1. The segment at 80 to 99 (NEAQSRGSGGGGGGRGGSGG) is disordered. Residues 86 to 99 (GSGGGGGGRGGSGG) show a composition bias toward gly residues. The glycine-rich (GR) required for cell-to-cell movement stretch occupies residues 86–168 (GSGGGGGGRG…GGSYGGGGGG (83 aa)). The segment at 95–143 (GGSGGGYRSGGGGGYSGGGGGGYSGGGGGGYERRSGGYGSGGGGGGRGY) is nuclear targeting sequence (M9). A Phosphoserine modification is found at serine 103. Positions 130–169 (GGYGSGGGGGGRGYGGGGRREGGGYGGGDGGSYGGGGGGW) are disordered.

The protein belongs to the GR-RBP family. As to quaternary structure, interacts with TRN1. Binds to small phloem-mobile single-stranded RNAs (ss-sRNA, e.g. small interfering RNA (siRNA) and microRNA (miRNA)) in the phloeme exudate, including viral-derived sRNA (vsiRNA). ADP-ribosylated by the Pseudomonas syringae type III effector HopU1. ADP-ribosylation reduces the ability of the protein to bind RNA. In terms of tissue distribution, ubiquitous.

Its subcellular location is the cytoplasm. It is found in the nucleus. The protein localises to the secreted. Its function is as follows. Plays a role in RNA transcription or processing during stress. Binds RNAs and DNAs sequence with a preference to single-stranded nucleic acids. Involved in mRNA alternative splicing of numerous targets by modulating splice site selection. Negatively regulates the circadian oscillations of its own transcript as well as RBG7 transcript. Forms an interlocked post-transcriptional negative feedback loop with the RBG7 autoregulatory circuit. Both proteins negatively autoregulate and reciprocally crossregulate by binding to their pre-mRNAs and promoting unproductive splicing coupled to degradation via the NMD pathway. Target of the Pseudomonas syringae type III effector HopU1. Mediates cell-to-cell trafficking of RNA interference (RNAi) signals (small RNAs (sRNA), e.g. small interfering RNA (siRNA) and microRNA (miRNA)) which regulate growth and development, as well as responses to environmental inputs, including pathogen attack; can compromise zucchini yellow mosaic virus (ZYMV) and tobacco rattle virus (TRV) infections at the early stage. The polypeptide is Glycine-rich RNA-binding protein 8 (Arabidopsis thaliana (Mouse-ear cress)).